The primary structure comprises 949 residues: Glycine dehydrogenase (decarboxylating) (949 aa).

N6-(pyridoxal phosphate)lysine is present on Lys704.

Belongs to the GcvP family. In terms of assembly, the glycine cleavage system is composed of four proteins: P, T, L and H. Pyridoxal 5'-phosphate is required as a cofactor.

The catalysed reaction is N(6)-[(R)-lipoyl]-L-lysyl-[glycine-cleavage complex H protein] + glycine + H(+) = N(6)-[(R)-S(8)-aminomethyldihydrolipoyl]-L-lysyl-[glycine-cleavage complex H protein] + CO2. Its function is as follows. The glycine cleavage system catalyzes the degradation of glycine. The P protein binds the alpha-amino group of glycine through its pyridoxal phosphate cofactor; CO(2) is released and the remaining methylamine moiety is then transferred to the lipoamide cofactor of the H protein. In Bacteroides fragilis (strain YCH46), this protein is Glycine dehydrogenase (decarboxylating).